Here is a 317-residue protein sequence, read N- to C-terminus: 4-hydroxy-3-methylbut-2-enyl diphosphate reductase (317 aa).

A [4Fe-4S] cluster-binding site is contributed by Cys12. (2E)-4-hydroxy-3-methylbut-2-enyl diphosphate-binding residues include His41 and His74. Dimethylallyl diphosphate contacts are provided by His41 and His74. Positions 41 and 74 each coordinate isopentenyl diphosphate. Cys97 contributes to the [4Fe-4S] cluster binding site. Residue His125 participates in (2E)-4-hydroxy-3-methylbut-2-enyl diphosphate binding. His125 provides a ligand contact to dimethylallyl diphosphate. His125 lines the isopentenyl diphosphate pocket. The active-site Proton donor is Glu127. Thr168 serves as a coordination point for (2E)-4-hydroxy-3-methylbut-2-enyl diphosphate. Position 198 (Cys198) interacts with [4Fe-4S] cluster. Ser226, Ser227, Asn228, and Ser270 together coordinate (2E)-4-hydroxy-3-methylbut-2-enyl diphosphate. Dimethylallyl diphosphate-binding residues include Ser226, Ser227, Asn228, and Ser270. The isopentenyl diphosphate site is built by Ser226, Ser227, Asn228, and Ser270.

The protein belongs to the IspH family. Homodimer. Requires [4Fe-4S] cluster as cofactor.

The enzyme catalyses isopentenyl diphosphate + 2 oxidized [2Fe-2S]-[ferredoxin] + H2O = (2E)-4-hydroxy-3-methylbut-2-enyl diphosphate + 2 reduced [2Fe-2S]-[ferredoxin] + 2 H(+). It carries out the reaction dimethylallyl diphosphate + 2 oxidized [2Fe-2S]-[ferredoxin] + H2O = (2E)-4-hydroxy-3-methylbut-2-enyl diphosphate + 2 reduced [2Fe-2S]-[ferredoxin] + 2 H(+). Its pathway is isoprenoid biosynthesis; dimethylallyl diphosphate biosynthesis; dimethylallyl diphosphate from (2E)-4-hydroxy-3-methylbutenyl diphosphate: step 1/1. It participates in isoprenoid biosynthesis; isopentenyl diphosphate biosynthesis via DXP pathway; isopentenyl diphosphate from 1-deoxy-D-xylulose 5-phosphate: step 6/6. Catalyzes the conversion of 1-hydroxy-2-methyl-2-(E)-butenyl 4-diphosphate (HMBPP) into a mixture of isopentenyl diphosphate (IPP) and dimethylallyl diphosphate (DMAPP). Acts in the terminal step of the DOXP/MEP pathway for isoprenoid precursor biosynthesis. The chain is 4-hydroxy-3-methylbut-2-enyl diphosphate reductase from Yersinia pseudotuberculosis serotype IB (strain PB1/+).